Consider the following 142-residue polypeptide: HTH-type transcriptional regulator MntR (142 aa).

In terms of domain architecture, HTH dtxR-type spans 1-63 (MPTPSMEDYI…YEKYRGLVLT (63 aa)). 6 residues coordinate Mn(2+): Asp8, Glu11, His77, Glu99, Glu102, and His103.

This sequence belongs to the DtxR/MntR family. Homodimer.

It localises to the cytoplasm. DNA binding is strongly activated by Mn(2+). In terms of biological role, central regulator of manganese homeostasis. In Bacillus cereus (strain B4264), this protein is HTH-type transcriptional regulator MntR.